The primary structure comprises 452 residues: UDP-N-acetylmuramoylalanine--D-glutamate ligase (452 aa).

Position 115–121 (115–121 (GTNGKTT)) interacts with ATP.

This sequence belongs to the MurCDEF family.

The protein localises to the cytoplasm. It catalyses the reaction UDP-N-acetyl-alpha-D-muramoyl-L-alanine + D-glutamate + ATP = UDP-N-acetyl-alpha-D-muramoyl-L-alanyl-D-glutamate + ADP + phosphate + H(+). It participates in cell wall biogenesis; peptidoglycan biosynthesis. Cell wall formation. Catalyzes the addition of glutamate to the nucleotide precursor UDP-N-acetylmuramoyl-L-alanine (UMA). The chain is UDP-N-acetylmuramoylalanine--D-glutamate ligase from Geobacter sp. (strain M21).